The primary structure comprises 260 residues: MGDIVVIKCGGSVLDSLSDSFFTSVRRLQAEGAKPIIVHGGGPAINGMLAKLEVETTFVDGLRKTTDSVLSVAEMVLCGQTNKKVVRKLQKAGVKSIGLSGSDGELVRVKAIDEAILGYVGEPVHVNGELLHMLVADGFVPVLAPIGVNDEFEPYNVNADTVAGAVATALQAKELIFVTDVAGILKDDELVPALTPEEVESLIEEGTIYGGMIPKVRSAIHSLTGTLEAVSIVNGNDVFFAESGKLIGTTIKKQVIHSQG.

Substrate is bound by residues 41-42 (GG), arginine 63, and asparagine 156.

It belongs to the acetylglutamate kinase family. ArgB subfamily.

Its subcellular location is the cytoplasm. The enzyme catalyses N-acetyl-L-glutamate + ATP = N-acetyl-L-glutamyl 5-phosphate + ADP. It functions in the pathway amino-acid biosynthesis; L-arginine biosynthesis; N(2)-acetyl-L-ornithine from L-glutamate: step 2/4. Its function is as follows. Catalyzes the ATP-dependent phosphorylation of N-acetyl-L-glutamate. This Halalkalibacterium halodurans (strain ATCC BAA-125 / DSM 18197 / FERM 7344 / JCM 9153 / C-125) (Bacillus halodurans) protein is Acetylglutamate kinase.